We begin with the raw amino-acid sequence, 401 residues long: Jumonji C domain-containing protein 5 (401 aa).

Residues 255–401 (EYLAQHELFA…PSFSVSFWWE (147 aa)) form the JmjC domain. Residues H306, D308, and H385 each coordinate Fe cation.

It depends on Fe(2+) as a cofactor. Expressed in neurons close to the dorsal lateral neurons involved in circadian rhythm.

It localises to the nucleus. The protein resides in the nucleoplasm. Its subcellular location is the cytoplasm. It catalyses the reaction L-arginyl-[protein] + 2-oxoglutarate + O2 = (3R)-3-hydroxy-L-arginyl-[protein] + succinate + CO2. Bifunctional enzyme that acts both as an endopeptidase and 2-oxoglutarate-dependent monooxygenase. May be involved in regulation of behavior and circadian rhythms. The sequence is that of Jumonji C domain-containing protein 5 from Drosophila melanogaster (Fruit fly).